The chain runs to 378 residues: Cytochrome P450 2C15 (378 aa).

Position 323 (cysteine 323) interacts with heme.

Belongs to the cytochrome P450 family. Requires heme as cofactor.

The protein localises to the endoplasmic reticulum membrane. It is found in the microsome membrane. It carries out the reaction an organic molecule + reduced [NADPH--hemoprotein reductase] + O2 = an alcohol + oxidized [NADPH--hemoprotein reductase] + H2O + H(+). In terms of biological role, cytochromes P450 are a group of heme-thiolate monooxygenases. In liver microsomes, this enzyme is involved in an NADPH-dependent electron transport pathway. It oxidizes a variety of structurally unrelated compounds, including steroids, fatty acids, and xenobiotics. The sequence is that of Cytochrome P450 2C15 (CYP2C15) from Oryctolagus cuniculus (Rabbit).